A 408-amino-acid chain; its full sequence is LL-diaminopimelate aminotransferase (408 aa).

2 residues coordinate substrate: Tyr-15 and Gly-42. Pyridoxal 5'-phosphate is bound by residues Tyr-72, 108–109 (SK), Tyr-132, Asn-187, Tyr-218, and 246–248 (SFS). 3 residues coordinate substrate: Lys-109, Tyr-132, and Asn-187. An N6-(pyridoxal phosphate)lysine modification is found at Lys-249. 2 residues coordinate pyridoxal 5'-phosphate: Arg-257 and Asn-292. Substrate is bound by residues Asn-292 and Arg-388.

The protein belongs to the class-I pyridoxal-phosphate-dependent aminotransferase family. LL-diaminopimelate aminotransferase subfamily. As to quaternary structure, homodimer. The cofactor is pyridoxal 5'-phosphate.

The enzyme catalyses (2S,6S)-2,6-diaminopimelate + 2-oxoglutarate = (S)-2,3,4,5-tetrahydrodipicolinate + L-glutamate + H2O + H(+). Its pathway is amino-acid biosynthesis; L-lysine biosynthesis via DAP pathway; LL-2,6-diaminopimelate from (S)-tetrahydrodipicolinate (aminotransferase route): step 1/1. Its function is as follows. Involved in the synthesis of meso-diaminopimelate (m-DAP or DL-DAP), required for both lysine and peptidoglycan biosynthesis. Catalyzes the direct conversion of tetrahydrodipicolinate to LL-diaminopimelate. The sequence is that of LL-diaminopimelate aminotransferase from Synechococcus sp. (strain RCC307).